Consider the following 234-residue polypeptide: Ammonia monooxygenase gamma subunit (234 aa).

Positions 1-20 are cleaved as a signal peptide; sequence MRMIKFLLLAILLAPFVAHS. The 156-residue stretch at 38 to 193 folds into the Cytochrome c domain; that stretch reads ESLQRGAKGF…RFVADLVNYM (156 aa). The heme c site is built by Cys51, Cys54, and His55. The chain crosses the membrane as a helical span at residues 206–226; that stretch reads ELGITVLLFLFGMLGLTYLLK.

It belongs to the cytochrome c family. The soluble ammonia monooxygenase is a nonamer composed of three alpha subunits (AmoA), three beta subunits (AmoB) and three gamma subunits (Cytochrome c1 PetC). Heme c serves as cofactor.

The protein resides in the cell membrane. Its subcellular location is the cytoplasm. Part of the ammonia monooxygenase complex, which catalyzes the oxidation of ammonia to hydroxylamine, the first reaction in the process of ammonia oxidation to nitrite. The sequence is that of Ammonia monooxygenase gamma subunit from Nitrosomonas europaea (strain ATCC 19718 / CIP 103999 / KCTC 2705 / NBRC 14298).